The sequence spans 189 residues: Elongation factor P (189 aa).

It belongs to the elongation factor P family.

The protein resides in the cytoplasm. It participates in protein biosynthesis; polypeptide chain elongation. Functionally, involved in peptide bond synthesis. Stimulates efficient translation and peptide-bond synthesis on native or reconstituted 70S ribosomes in vitro. Probably functions indirectly by altering the affinity of the ribosome for aminoacyl-tRNA, thus increasing their reactivity as acceptors for peptidyl transferase. This Phytoplasma australiense protein is Elongation factor P.